A 119-amino-acid polypeptide reads, in one-letter code: DNA-binding protein inhibitor ID-3 (119 aa).

Residues 28–80 (RGKSPSTEEPLSLLDDMNHCYSRLRELVPGVPRGTQLSQVEILQRVIDYILDL) enclose the bHLH domain. Positions 35-87 (EEPLSLLDDMNHCYSRLRELVPGVPRGTQLSQVEILQRVIDYILDLQVVLAEP) are interaction with IFI204.

In terms of assembly, homodimer, and heterodimer with other HLH proteins. Interacts with CLOCK and BMAL1. Interacts with COPS5 and COPS7A. Interacts with IFI204. Interacts with GATA4 and NKX2-5. Interacts with ANKRD2; both proteins cooperate in myoblast differentiation. In terms of processing, polyubiquitinated; which is favored by Ifi204 and leads to proteasomal degradation. In terms of tissue distribution, expressed by myoblasts (at protein level).

Its subcellular location is the nucleus. It localises to the cytoplasm. Functionally, transcriptional regulator (lacking a basic DNA binding domain) which negatively regulates the basic helix-loop-helix (bHLH) transcription factors by forming heterodimers and inhibiting their DNA binding and transcriptional activity. Implicated in regulating a variety of cellular processes, including cellular growth, senescence, differentiation, apoptosis, angiogenesis, and neoplastic transformation. Involved in myogenesis by inhibiting skeletal muscle and cardiac myocyte differentiation and promoting muscle precursor cells proliferation. Inhibits the binding of E2A-containing protein complexes to muscle creatine kinase E-box enhancer. Regulates the circadian clock by repressing the transcriptional activator activity of the CLOCK-BMAL1 heterodimer. This chain is DNA-binding protein inhibitor ID-3 (Id3), found in Mus musculus (Mouse).